We begin with the raw amino-acid sequence, 749 residues long: Cytosolic phospholipase A2 (749 aa).

Residues 1–178 (MSFIDPYQHI…MKKLLGPKNS (178 aa)) form a phospholipid binding region. Phosphoserine is present on Ser2. Residues 6–122 (PYQHIIVEHQ…KVGEKKEVPF (117 aa)) form the C2 domain. Ca(2+)-binding residues include Asp40, Thr41, Asp43, Asn65, Asp93, Ala94, and Asn95. Residues 140-740 (SCPDLRFSMA…SNVEARRFFN (601 aa)) enclose the PLA2c domain. Ser228 acts as the Nucleophile in catalysis. At Thr268 the chain carries Phosphothreonine. Positions 409–457 (GSQSRGSTMEEELENITTKHIVSNDSSDSDDESHEPKGTENEDAGSDYQ) are disordered. Phosphoserine occurs at positions 434, 435, and 437. The residue at position 505 (Ser505) is a Phosphoserine; by MAPK. Position 515 is a phosphoserine (Ser515). A Glycyl lysine isopeptide (Lys-Gly) (interchain with G-Cter in SUMO2) cross-link involves residue Lys541. Catalysis depends on Asp549, which acts as the Proton acceptor. Lys606 participates in a covalent cross-link: Glycyl lysine isopeptide (Lys-Gly) (interchain with G-Cter in SUMO2). Residues Ser727 and Ser729 each carry the phosphoserine modification.

As to quaternary structure, interacts with KAT5. Phosphorylated at both Ser-505 and Ser-727 in response to mitogenic stimuli.

Its subcellular location is the cytoplasm. It is found in the golgi apparatus membrane. It localises to the nucleus envelope. The enzyme catalyses a 1,2-diacyl-sn-glycero-3-phosphocholine + H2O = a 1-acyl-sn-glycero-3-phosphocholine + a fatty acid + H(+). It carries out the reaction a 1-O-alkyl-2-acyl-sn-glycero-3-phosphocholine + H2O = a 1-O-alkyl-sn-glycero-3-phosphocholine + a fatty acid + H(+). The catalysed reaction is a 1-acyl-sn-glycero-3-phosphocholine + H2O = sn-glycerol 3-phosphocholine + a fatty acid + H(+). It catalyses the reaction 1-hexadecanoyl-2-(5Z,8Z,11Z,14Z-eicosatetraenoyl)-sn-glycero-3-phosphocholine + H2O = 1-hexadecanoyl-sn-glycero-3-phosphocholine + (5Z,8Z,11Z,14Z)-eicosatetraenoate + H(+). The enzyme catalyses 1,2-di-(5Z,8Z,11Z,14Z-eicosatetraenoyl)-sn-glycero-3-phosphocholine + H2O = 1-(5Z,8Z,11Z,14Z-eicosatetraenoyl)-sn-glycero-3-phosphocholine + (5Z,8Z,11Z,14Z)-eicosatetraenoate + H(+). It carries out the reaction 1-octadecanoyl-2-(5Z,8Z,11Z,14Z-eicosatetraenoyl)-sn-glycero-3-phosphocholine + H2O = 1-octadecanoyl-sn-glycero-3-phosphocholine + (5Z,8Z,11Z,14Z)-eicosatetraenoate + H(+). The catalysed reaction is 1-hexadecanoyl-2-(9Z,12Z-octadecadienoyl)-sn-glycero-3-phosphocholine + H2O = (9Z,12Z)-octadecadienoate + 1-hexadecanoyl-sn-glycero-3-phosphocholine + H(+). It catalyses the reaction 1-octadecanoyl-2-(9Z,12Z,15Z-octadecatrienoyl)-sn-glycero-3-phosphocholine + H2O = (9Z,12Z,15Z)-octadecatrienoate + 1-octadecanoyl-sn-glycero-3-phosphocholine + H(+). The enzyme catalyses 1-(5Z,8Z,11Z,14Z-eicosatetraenoyl)-2-hexadecanoyl-sn-glycero-3-phosphocholine + H2O = 1-(5Z,8Z,11Z,14Z-eicosatetraenoyl)-sn-glycero-3-phosphocholine + hexadecanoate + H(+). It carries out the reaction 1-O-hexadecyl-2-(5Z,8Z,11Z,14Z)-eicosatetraenoyl-sn-glycero-3-phosphocholine + H2O = 1-O-hexadecyl-sn-glycero-3-phosphocholine + (5Z,8Z,11Z,14Z)-eicosatetraenoate + H(+). The catalysed reaction is 1,2-di-(9Z-octadecenoyl)-sn-glycero-3-phospho-(1'-sn-glycerol) + H2O = 1-(9Z-octadecenoyl)-sn-glycero-3-phospho-(1'-sn-glycerol) + (9Z)-octadecenoate + H(+). It catalyses the reaction 1-octadecanoyl-2-(5Z,8Z,11Z,14Z-eicosatetraenoyl)-sn-glycero-3-phosphate + H2O = 1-octadecanoyl-sn-glycero-3-phosphate + (5Z,8Z,11Z,14Z)-eicosatetraenoate + H(+). The enzyme catalyses 1-hexadecanoyl-sn-glycero-3-phosphocholine + H2O = sn-glycerol 3-phosphocholine + hexadecanoate + H(+). It carries out the reaction 2-(prostaglandin E2)-sn-glycero-3-phosphoethanolamine + H2O = sn-glycero-3-phosphoethanolamine + prostaglandin E2 + H(+). The catalysed reaction is 2-[(15S)-hydroxy-(5Z,8Z,11Z,13E)-eicosatetraenoyl]-sn-glycero-3-phosphocholine + H2O = (15S)-hydroxy-(5Z,8Z,11Z,13E)-eicosatetraenoate + sn-glycerol 3-phosphocholine + H(+). It catalyses the reaction 2-[(15R)-hydroxy-(5Z,8Z,11Z,13E)-eicosatetraenoyl]-sn-glycero-3-phosphocholine + H2O = (15R)-hydroxy-(5Z,8Z,11Z,13E)-eicosatetraenoate + sn-glycerol 3-phosphocholine + H(+). The enzyme catalyses 2-(prostaglandin E2)-sn-glycero-3-phosphocholine + H2O = prostaglandin E2 + sn-glycerol 3-phosphocholine + H(+). It carries out the reaction 2-[(11R)-hydroxy-(5Z,8Z,12E,14Z)-eicosatetraenoyl]-sn-glycero-3-phosphocholine + H2O = (11R)-hydroxy-(5Z,8Z,12E,14Z)-eicosatetraenoate + sn-glycerol 3-phosphocholine + H(+). The catalysed reaction is 1-(5Z,8Z,11Z,14Z-eicosatetraenoyl)-2-O-hexadecyl-sn-glycero-3-phosphocholine + H2O = 2-O-hexadecyl-sn-glycero-3-phosphocholine + (5Z,8Z,11Z,14Z)-eicosatetraenoate + H(+). It catalyses the reaction 1-octadecanoyl-2-(5Z,8Z,11Z,14Z-eicosatetraenoyl)-sn-glycero-3-phosphocholine + glycerol = 1-(5Z,8Z,11Z,14Z-eicosatetraenoyl)-glycerol + 1-octadecanoyl-sn-glycero-3-phosphocholine. The enzyme catalyses 1-octadecanoyl-2-(9Z,12Z,15Z-octadecatrienoyl)-sn-glycero-3-phosphocholine + glycerol = 1-(9Z,12Z,15Z-octadecatrienoyl)-glycerol + 1-octadecanoyl-sn-glycero-3-phosphocholine. The protein operates within membrane lipid metabolism; glycerophospholipid metabolism. Its pathway is lipid metabolism; arachidonate metabolism. It functions in the pathway lipid metabolism; prostaglandin biosynthesis. It participates in lipid metabolism; leukotriene B4 biosynthesis. Its activity is regulated as follows. Activated by cytosolic calcium, which is necessary for binding to membrane lipids. Activated by phosphorylation in response to mitogenic stimuli. Functionally, has primarily calcium-dependent phospholipase and lysophospholipase activities, with a major role in membrane lipid remodeling and biosynthesis of lipid mediators of the inflammatory response. Plays an important role in embryo implantation and parturition through its ability to trigger prostanoid production. Preferentially hydrolyzes the ester bond of the fatty acyl group attached at sn-2 position of phospholipids (phospholipase A2 activity). Selectively hydrolyzes sn-2 arachidonoyl group from membrane phospholipids, providing the precursor for eicosanoid biosynthesis via the cyclooxygenase pathway. In an alternative pathway of eicosanoid biosynthesis, hydrolyzes sn-2 fatty acyl chain of eicosanoid lysophopholipids to release free bioactive eicosanoids. Hydrolyzes the ester bond of the fatty acyl group attached at sn-1 position of phospholipids (phospholipase A1 activity) only if an ether linkage rather than an ester linkage is present at the sn-2 position. This hydrolysis is not stereospecific. Has calcium-independent phospholipase A2 and lysophospholipase activities in the presence of phosphoinositides. Has O-acyltransferase activity. Catalyzes the transfer of fatty acyl chains from phospholipids to a primary hydroxyl group of glycerol (sn-1 or sn-3), potentially contributing to monoacylglycerol synthesis. The chain is Cytosolic phospholipase A2 (PLA2G4A) from Pongo abelii (Sumatran orangutan).